Here is a 167-residue protein sequence, read N- to C-terminus: Protein MIX23 (167 aa).

The interval 81–108 is disordered; it reads QLDQDRNTSKSPLKSQQQLPSSSTTQVS. Low complexity predominate over residues 89–106; sequence SKSPLKSQQQLPSSSTTQ.

The protein belongs to the MIX23 family.

This Schizosaccharomyces pombe (strain 972 / ATCC 24843) (Fission yeast) protein is Protein MIX23 (cid2).